The following is a 185-amino-acid chain: uncharacterized protein (185 aa).

In terms of tissue distribution, component of the acid-insoluble and acid-soluble organic matrix of calcified layers of the shell (at protein level).

The protein resides in the secreted. This is an uncharacterized protein from Lottia gigantea (Giant owl limpet).